Here is a 409-residue protein sequence, read N- to C-terminus: Menaquinone reductase (409 aa).

FAD is bound by residues 11 to 15 (GAGPA), 44 to 47 (CGDG), Arg101, Val125, Asp288, and 300 to 301 (GI).

Belongs to the geranylgeranyl reductase family. FAD serves as cofactor.

It carries out the reaction menaquinone-9 + AH2 = beta-dihydromenaquinone-9 + A. Its pathway is quinol/quinone metabolism; menaquinone biosynthesis. Its function is as follows. Catalyzes the reduction of a single double bond in the isoprenoid tail of menaquinone (MK-9) in M.smegmatis, likely the beta-isoprene unit, forming the predominant form of menaquinone found in mycobacteria, MK-9(II-H2). The chain is Menaquinone reductase from Mycolicibacterium smegmatis (strain ATCC 700084 / mc(2)155) (Mycobacterium smegmatis).